The following is a 525-amino-acid chain: Golgi resident protein GCP60 (525 aa).

A2 carries the post-translational modification N-acetylalanine. Residues 12 to 68 (VSLDGLTLSPDSEERPGAEGAPPQTPPSSAPGNGLGSGASGQQREPGEAAAEGAAEE) form a disordered region. S13 bears the Phosphoserine mark. A Phosphothreonine modification is found at T18. S20 and S40 each carry phosphoserine. A compositionally biased stretch (low complexity) spans 52 to 64 (GQQREPGEAAAEG). One can recognise an ACB domain in the interval 80–171 (LEELYGLALR…LNKCCPLLSA (92 aa)). Positions 169 to 254 (LSAYVASHRI…AALNSQTAVQ (86 aa)) form a coiled coil. The segment at 180 to 226 (KEEEEKRRKAEEERRQREEEERERLQKEEEKRKREKEDRLRREEEER) is disordered. The segment at 238–305 (QQKQQIMAAL…QQQAALQKQQ (68 aa)) is q domain; Interaction with PI4KB, TBC1D22A and TBC1D22B. The span at 319–336 (KVNTAGASDTLSVNGQAK) shows a compositional bias: polar residues. The interval 319-346 (KVNTAGASDTLSVNGQAKTHTENSEKVL) is disordered. Residues 337-346 (THTENSEKVL) are compositionally biased toward basic and acidic residues. The 143-residue stretch at 381–523 (KEKIRQDADS…SKSVYYRVYY (143 aa)) folds into the GOLD domain. Positions 448–470 (SDEEEEEEENVTCEEKAKKNANK) form a coiled coil.

In terms of assembly, homodimer. Interacts with the C-terminal cytoplasmic domain of giantin/GOLGB1. Interacts with PBR and PKA regulatory subunit RI-alpha. Does not interact with PKA regulatory subunit RI-beta nor PKA regulatory subunit RII-alpha. Interacts (via Q domain) with PI4KB (via N-terminus). Interacts (via Q domain) with TBC1D22A and TBC1D22B; interactions with PI4KB and with TBC1D22A and TBC1D22B are mutually exclusive. Interacts with C10ORF76 and RAB11B. Expressed in brain (hippocampus, olfactory bulb, neuronal and glial cells of the cortex), eye, submaxillary gland, testis (interstitial and tubular compartments), ovary (granulosa cells, theca cells at late stages and primary follicles), adrenal gland (fasciculata and glomerulosa cells), heart, liver, and steroidogenic cell lines.

It localises to the golgi apparatus membrane. It is found in the mitochondrion. Its function is as follows. Involved in the maintenance of Golgi structure by interacting with giantin, affecting protein transport between the endoplasmic reticulum and Golgi. Involved in hormone-induced steroid biosynthesis in testicular Leydig cells. Recruits PI4KB to the Golgi apparatus membrane; enhances the enzyme activity of PI4KB activity via its membrane recruitment thereby increasing the local concentration of the substrate in the vicinity of the kinase. The chain is Golgi resident protein GCP60 (Acbd3) from Mus musculus (Mouse).